The following is a 160-amino-acid chain: Probable small nuclear ribonucleoprotein-associated protein B (160 aa).

One can recognise a Sm domain in the interval 4 to 86 (SKNNKMMAHL…IVSMTVDGPP (83 aa)). Residues 80 to 160 (MTVDGPPPRD…YGGPPGGRPF (81 aa)) are disordered. Composition is skewed to gly residues over residues 99 to 113 (GGAG…GGRG), 128 to 143 (APGG…GGPG), and 150 to 160 (GYGGPPGGRPF).

It belongs to the snRNP SmB/SmN family.

The protein resides in the nucleus. Its subcellular location is the cytoplasm. The protein localises to the cytosol. Plays a role in pre-mRNA splicing as a core component of the spliceosomal U1, U2, U4 and U5 small nuclear ribonucleoproteins (snRNPs), the building blocks of the spliceosome. The protein is Probable small nuclear ribonucleoprotein-associated protein B (snr-2) of Caenorhabditis elegans.